The chain runs to 1015 residues: DNA polymerase catalytic subunit (1015 aa).

This sequence belongs to the DNA polymerase type-B family. Forms a complex with the major DNA-binding protein BALF2, the DNA polymerase processivity factor BMRF1, and the alkaline exonuclease BGLF5. Interacts with the putative helicase-primase complex composed of BBLF4, BSLF1 and BBLF2/3 proteins; these interactions may coordinate leading and lagging strand DNA synthesis at the replication fork.

It is found in the host nucleus. It catalyses the reaction DNA(n) + a 2'-deoxyribonucleoside 5'-triphosphate = DNA(n+1) + diphosphate. Functionally, replicates viral genomic DNA in the late phase of lytic infection, producing long concatemeric DNA. The replication complex is composed of six viral proteins: the DNA polymerase, processivity factor, primase, primase-associated factor, helicase, and ssDNA-binding protein. The polypeptide is DNA polymerase catalytic subunit (Homo sapiens (Human)).